We begin with the raw amino-acid sequence, 384 residues long: Intraflagellar transport protein 46 homolog (384 aa).

Disordered stretches follow at residues 52–151 and 358–384; these read VNAE…PADY and SATD…LTLD. The span at 87–99 shows a compositional bias: basic and acidic residues; it reads EKLEEDTKRKKEP. Over residues 110-138 the composition is skewed to acidic residues; that stretch reads DEEEDEDDDDDDDDDDSDDTESDEEEEEP. Over residues 358–374 the composition is skewed to polar residues; the sequence is SATDGQKSDTPPASRSA.

This sequence belongs to the IFT46 family.

Its subcellular location is the cytoplasm. It localises to the cytoskeleton. The protein localises to the cilium basal body. It is found in the cell projection. The protein resides in the cilium. Its function is as follows. Forms part of a complex involved in intraflagellar transport (IFT), the bi-directional movement of particles required for the assembly, maintenance and functioning of primary cilia. Plays a role in early embryonic development. This is Intraflagellar transport protein 46 homolog from Danio rerio (Zebrafish).